The sequence spans 472 residues: tRNA modification GTPase MnmE (472 aa).

(6S)-5-formyl-5,6,7,8-tetrahydrofolate-binding residues include Arg-28, Glu-91, and Lys-130. One can recognise a TrmE-type G domain in the interval 225 to 391 (GAKVVLAGKT…LSEKAYSVLA (167 aa)). Residue Asn-235 participates in K(+) binding. Residues 235–240 (NAGKSS), 254–260 (SDIHGTT), and 279–282 (DTAG) each bind GTP. Mg(2+) is bound at residue Ser-239. The K(+) site is built by Ser-254, Ile-256, and Thr-259. Thr-260 contributes to the Mg(2+) binding site. Residue Lys-472 participates in (6S)-5-formyl-5,6,7,8-tetrahydrofolate binding.

Belongs to the TRAFAC class TrmE-Era-EngA-EngB-Septin-like GTPase superfamily. TrmE GTPase family. Homodimer. Heterotetramer of two MnmE and two MnmG subunits. The cofactor is K(+).

It localises to the cytoplasm. Functionally, exhibits a very high intrinsic GTPase hydrolysis rate. Involved in the addition of a carboxymethylaminomethyl (cmnm) group at the wobble position (U34) of certain tRNAs, forming tRNA-cmnm(5)s(2)U34. This Treponema denticola (strain ATCC 35405 / DSM 14222 / CIP 103919 / JCM 8153 / KCTC 15104) protein is tRNA modification GTPase MnmE.